A 158-amino-acid chain; its full sequence is Sorbin and SH3 domain-containing protein 2 (158 aa).

Residues 1-46 (MRAATPLQTVDRPKDWYKTMFKQIHMVHKPDDDTDMYNTPYTYNAG) form the SoHo domain. The tract at residues 28–158 (HKPDDDTDMY…TKPQAGRRKV (131 aa)) is disordered. A compositionally biased stretch (polar residues) spans 50–66 (SPYSAQSHPAAKTQTYR). Residues 71–81 (SHSDNGTDAFK) are compositionally biased toward basic and acidic residues. At serine 73 the chain carries Phosphoserine. Pro residues predominate over residues 86 to 99 (PVPPPHVPPPVPPL). A compositionally biased stretch (basic and acidic residues) spans 100-136 (RPRDRSSTEKHDWDPPDRKVDTRKFRSEPRSIFEYEP). The residue at position 153 (alanine 153) is an Alanine amide.

As to quaternary structure, interacts with ABL1/c-Abl, ABL2/v-Abl/Arg, ACTN, AKT1, CBL, PALLD and PAK1. Interacts with ABL, CBL, DNM1, DNM2, FLOT1, AFDN, PTK2B/PYK2, SAPAP, SPTAN1, SYNJ1, SYNJ2, VCL/vinculin, and WASF. Interacts with PTPN12 and WASF1 via its SH3 domains; this interaction may mediate the partial PTPN12 and WASF1 translocation to focal adhesion sites. Ubiquitinated by CBL. In terms of processing, dephosphorylated by PTPN12. Expressed in duodenum.

Its subcellular location is the cytoplasm. The protein localises to the perinuclear region. It localises to the apical cell membrane. The protein resides in the cell junction. It is found in the focal adhesion. Its subcellular location is the cell projection. The protein localises to the lamellipodium. Its function is as follows. Adapter protein that plays a role in the assembling of signaling complexes, being a link between ABL kinases and actin cytoskeleton. Can form complex with ABL1 and CBL, thus promoting ubiquitination and degradation of ABL1 or with AKT1 and PAK1, thus mediating AKT1-mediated activation of PAK1. May play a role in the regulation of pancreatic cell adhesion, possibly by acting on WASF1 phosphorylation, enhancing phosphorylation by ABL1, as well as dephosphorylation by PTPN12. Increases water and sodium absorption in the intestine and gall-bladder. This chain is Sorbin and SH3 domain-containing protein 2 (SORBS2), found in Sus scrofa (Pig).